A 406-amino-acid polypeptide reads, in one-letter code: Argininosuccinate synthase (406 aa).

An ATP-binding site is contributed by 8–16 (AYSGGLDTS). Residue tyrosine 86 participates in L-citrulline binding. Glycine 116 is an ATP binding site. Positions 118, 122, and 123 each coordinate L-aspartate. An L-citrulline-binding site is contributed by asparagine 122. The L-citrulline site is built by arginine 126, serine 174, serine 183, glutamate 259, and tyrosine 271.

Belongs to the argininosuccinate synthase family. Type 1 subfamily. Homotetramer.

The protein localises to the cytoplasm. The catalysed reaction is L-citrulline + L-aspartate + ATP = 2-(N(omega)-L-arginino)succinate + AMP + diphosphate + H(+). It participates in amino-acid biosynthesis; L-arginine biosynthesis; L-arginine from L-ornithine and carbamoyl phosphate: step 2/3. This Oenococcus oeni (strain ATCC BAA-331 / PSU-1) protein is Argininosuccinate synthase.